The following is a 223-amino-acid chain: GTP cyclohydrolase 1 (223 aa).

Zn(2+) contacts are provided by Cys-111, His-114, and Cys-182.

It belongs to the GTP cyclohydrolase I family. Homomer.

The catalysed reaction is GTP + H2O = 7,8-dihydroneopterin 3'-triphosphate + formate + H(+). Its pathway is cofactor biosynthesis; 7,8-dihydroneopterin triphosphate biosynthesis; 7,8-dihydroneopterin triphosphate from GTP: step 1/1. The sequence is that of GTP cyclohydrolase 1 from Flavobacterium johnsoniae (strain ATCC 17061 / DSM 2064 / JCM 8514 / BCRC 14874 / CCUG 350202 / NBRC 14942 / NCIMB 11054 / UW101) (Cytophaga johnsonae).